A 137-amino-acid chain; its full sequence is Phosphoribosyl-AMP cyclohydrolase (137 aa).

Residue D83 participates in Mg(2+) binding. C84 provides a ligand contact to Zn(2+). Mg(2+) is bound by residues D85 and D87. Residues C101 and C108 each coordinate Zn(2+).

Belongs to the PRA-CH family. In terms of assembly, homodimer. Mg(2+) is required as a cofactor. Zn(2+) serves as cofactor.

Its subcellular location is the cytoplasm. It catalyses the reaction 1-(5-phospho-beta-D-ribosyl)-5'-AMP + H2O = 1-(5-phospho-beta-D-ribosyl)-5-[(5-phospho-beta-D-ribosylamino)methylideneamino]imidazole-4-carboxamide. It functions in the pathway amino-acid biosynthesis; L-histidine biosynthesis; L-histidine from 5-phospho-alpha-D-ribose 1-diphosphate: step 3/9. Functionally, catalyzes the hydrolysis of the adenine ring of phosphoribosyl-AMP. This chain is Phosphoribosyl-AMP cyclohydrolase, found in Burkholderia mallei (strain ATCC 23344).